Here is a 196-residue protein sequence, read N- to C-terminus: Mpv17-like protein (196 aa).

Residues 1-16 (MVSWWQALTRAAGRYP) lie on the Cytoplasmic side of the membrane. The tract at residues 16–55 (PWPANVLLYAGFFSGGDALQQVLRGGPADWQHTRHVATVA) is targeting to peroxisomes. Residues 17 to 34 (WPANVLLYAGFFSGGDAL) traverse the membrane as a helical segment. Over 35-50 (QQVLRGGPADWQHTRH) the chain is Lumenal. A helical membrane pass occupies residues 51–67 (VATVAVAFHANLNYVWL). Topologically, residues 68–90 (NLLERALPGRAPRTILAKVLCDQ) are cytoplasmic. A helical membrane pass occupies residues 91-108 (ALGGPVYVSTFYAGMSIL). At 109 to 150 (QGKDDIFLDMRQKFWNTYKSGLMYWPFVQLINFSLIPIRWRT) the chain is on the lumenal side. The chain crosses the membrane as a helical span at residues 151-167 (AYTGLCGFLWATFLCFS). Topologically, residues 168 to 196 (QQEGDGTFKSAFTFRRIKVTNEVEKPSEK) are cytoplasmic.

It belongs to the peroxisomal membrane protein PXMP2/4 family.

It localises to the peroxisome membrane. Its function is as follows. Participates in reactive oxygen species metabolism by up- or down-regulation of the genes of antioxidant enzymes. Protective against the mitochondrial apoptotic cascade. The chain is Mpv17-like protein (MPV17L) from Bos taurus (Bovine).